Here is a 315-residue protein sequence, read N- to C-terminus: 6-phosphogluconolactonase-like protein 2 (315 aa).

Residues serine 42 and serine 64 each carry the phosphoserine modification. Residues 59 to 85 (CKSTASAAEGKSGSSGSGSGSSKPKKE) form a disordered region. Low complexity predominate over residues 60 to 70 (KSTASAAEGKS).

Belongs to the glucosamine/galactosamine-6-phosphate isomerase family. 6-phosphogluconolactonase subfamily.

The protein localises to the cytoplasm. May be involved in regulation of tRNA subcellular distribution. This is 6-phosphogluconolactonase-like protein 2 (SOL2) from Saccharomyces cerevisiae (strain ATCC 204508 / S288c) (Baker's yeast).